Here is a 522-residue protein sequence, read N- to C-terminus: DNA damage-binding protein CMR1 (522 aa).

Residues 38-100 form a disordered region; it reads AGVLEKSRAP…DNQLLKMGSP (63 aa). Residues 54–63 are compositionally biased toward polar residues; the sequence is TTNTRATKSA. At Ser64 the chain carries Phosphoserine. Thr69 carries the phosphothreonine modification. The span at 75–84 shows a compositional bias: basic and acidic residues; the sequence is LRGESADDVK. WD repeat units lie at residues 183 to 224, 239 to 281, 287 to 327, 331 to 371, 388 to 427, 442 to 481, and 482 to 521; these read ITYE…LADS, LFTK…EVLT, DDSL…SEYN, LADK…KKPE, DSRL…HLSA, GRWT…LAHL, and PTAT…IKQE. Ser224 carries the post-translational modification Phosphoserine.

The protein belongs to the WD repeat DDB2/WDR76 family.

The protein resides in the cytoplasm. It is found in the nucleus. Its function is as follows. DNA-binding protein that binds to both single- and double-stranded DNA. Binds preferentially to UV-damaged DNA in vitro. May be involved in DNA-metabolic processes. The polypeptide is DNA damage-binding protein CMR1 (Saccharomyces cerevisiae (strain ATCC 204508 / S288c) (Baker's yeast)).